A 430-amino-acid polypeptide reads, in one-letter code: Dihydroorotase (430 aa).

The Zn(2+) site is built by His-60 and His-62. Substrate is bound by residues 62–64 and Asn-94; that span reads HFR. Zn(2+)-binding residues include Asp-151, His-178, and His-231. Residue Asn-277 participates in substrate binding. Zn(2+) is bound at residue Asp-304. Asp-304 is a catalytic residue. Substrate-binding positions include His-308 and 322–323; that span reads FG.

The protein belongs to the metallo-dependent hydrolases superfamily. DHOase family. Class I DHOase subfamily. It depends on Zn(2+) as a cofactor.

The enzyme catalyses (S)-dihydroorotate + H2O = N-carbamoyl-L-aspartate + H(+). It functions in the pathway pyrimidine metabolism; UMP biosynthesis via de novo pathway; (S)-dihydroorotate from bicarbonate: step 3/3. In terms of biological role, catalyzes the reversible cyclization of carbamoyl aspartate to dihydroorotate. This is Dihydroorotase from Carboxydothermus hydrogenoformans (strain ATCC BAA-161 / DSM 6008 / Z-2901).